The sequence spans 243 residues: 1-(5-phosphoribosyl)-5-[(5-phosphoribosylamino)methylideneamino] imidazole-4-carboxamide isomerase (243 aa).

Catalysis depends on D8, which acts as the Proton acceptor. Catalysis depends on D130, which acts as the Proton donor.

It belongs to the HisA/HisF family.

The protein localises to the cytoplasm. The enzyme catalyses 1-(5-phospho-beta-D-ribosyl)-5-[(5-phospho-beta-D-ribosylamino)methylideneamino]imidazole-4-carboxamide = 5-[(5-phospho-1-deoxy-D-ribulos-1-ylimino)methylamino]-1-(5-phospho-beta-D-ribosyl)imidazole-4-carboxamide. It functions in the pathway amino-acid biosynthesis; L-histidine biosynthesis; L-histidine from 5-phospho-alpha-D-ribose 1-diphosphate: step 4/9. This is 1-(5-phosphoribosyl)-5-[(5-phosphoribosylamino)methylideneamino] imidazole-4-carboxamide isomerase from Ruthia magnifica subsp. Calyptogena magnifica.